A 295-amino-acid chain; its full sequence is MLPLTKIWLCYGIFSAILMIFMIVLLSVSKHFTNSFYRVITMDIILNLLCWVNTWPSRMVFREDGFGFARFLYEFYNKSFDVSFFLSNVFFHVQSASTICICCHRLSTAIFDNSNRFWSRFYLLVYALIILYSFLAVQLLYRAPIKFDYELNKFYSEPATLDQRLSVAMYLRCFMSGYLLAIIIIALSTLYQVRKRIAPFDHLHKNLLRKMSLIAFSHTFVFTMLLAWQTLNSFVVYASFIELLMIVSDMISFSMAYILLIFDGNVRSVIKNNLPVIQINGRRISDAQRSQNNIT.

Helical transmembrane passes span 7–27, 39–61, 121–141, 173–193, 211–230, and 241–261; these read IWLC…VLLS, VITM…RMVF, FYLL…QLLY, CFMS…LYQV, MSLI…AWQT, and IELL…ILLI.

This sequence belongs to the nematode receptor-like protein srg family.

Its subcellular location is the membrane. The protein is Serpentine receptor class gamma-53 (srg-53) of Caenorhabditis elegans.